Here is a 427-residue protein sequence, read N- to C-terminus: Glutamate-1-semialdehyde 2,1-aminomutase (427 aa).

N6-(pyridoxal phosphate)lysine is present on Lys-263.

The protein belongs to the class-III pyridoxal-phosphate-dependent aminotransferase family. HemL subfamily. In terms of assembly, homodimer. Requires pyridoxal 5'-phosphate as cofactor.

The protein resides in the cytoplasm. It carries out the reaction (S)-4-amino-5-oxopentanoate = 5-aminolevulinate. It functions in the pathway porphyrin-containing compound metabolism; protoporphyrin-IX biosynthesis; 5-aminolevulinate from L-glutamyl-tRNA(Glu): step 2/2. This is Glutamate-1-semialdehyde 2,1-aminomutase from Caldicellulosiruptor saccharolyticus (strain ATCC 43494 / DSM 8903 / Tp8T 6331).